A 567-amino-acid polypeptide reads, in one-letter code: Urease subunit alpha (567 aa).

In terms of domain architecture, Urease spans 129–567; the sequence is GGIDTHIHFI…LPMAQRYFLF (439 aa). Residues His134, His136, and Lys217 each contribute to the Ni(2+) site. N6-carboxylysine is present on Lys217. His219 serves as a coordination point for substrate. Residues His246 and His272 each contribute to the Ni(2+) site. His320 acts as the Proton donor in catalysis. Asp360 contacts Ni(2+).

This sequence belongs to the metallo-dependent hydrolases superfamily. Urease alpha subunit family. As to quaternary structure, heterotrimer of UreA (gamma), UreB (beta) and UreC (alpha) subunits. Three heterotrimers associate to form the active enzyme. Ni cation is required as a cofactor. Carboxylation allows a single lysine to coordinate two nickel ions.

The protein localises to the cytoplasm. The enzyme catalyses urea + 2 H2O + H(+) = hydrogencarbonate + 2 NH4(+). It participates in nitrogen metabolism; urea degradation; CO(2) and NH(3) from urea (urease route): step 1/1. This is Urease subunit alpha from Delftia acidovorans (strain DSM 14801 / SPH-1).